The chain runs to 167 residues: Glucose-6-phosphate isomerase (167 aa).

E54 (proton donor) is an active-site residue. H85 is an active-site residue.

This sequence belongs to the GPI family.

It is found in the cytoplasm. The catalysed reaction is alpha-D-glucose 6-phosphate = beta-D-fructose 6-phosphate. Its pathway is carbohydrate biosynthesis; gluconeogenesis. It functions in the pathway carbohydrate degradation; glycolysis; D-glyceraldehyde 3-phosphate and glycerone phosphate from D-glucose: step 2/4. In terms of biological role, catalyzes the reversible isomerization of glucose-6-phosphate to fructose-6-phosphate. This Klebsiella oxytoca protein is Glucose-6-phosphate isomerase.